A 120-amino-acid polypeptide reads, in one-letter code: Large ribosomal subunit protein uL18 (120 aa).

This sequence belongs to the universal ribosomal protein uL18 family. In terms of assembly, part of the 50S ribosomal subunit; part of the 5S rRNA/L5/L18/L25 subcomplex. Contacts the 5S and 23S rRNAs.

In terms of biological role, this is one of the proteins that bind and probably mediate the attachment of the 5S RNA into the large ribosomal subunit, where it forms part of the central protuberance. The polypeptide is Large ribosomal subunit protein uL18 (Bartonella bacilliformis (strain ATCC 35685 / KC583 / Herrer 020/F12,63)).